Reading from the N-terminus, the 322-residue chain is Undecaprenyl-phosphate 4-deoxy-4-formamido-L-arabinose transferase (322 aa).

Residues 1-235 are Cytoplasmic-facing; the sequence is MFEIHPVKKV…TCLTTTPLRM (235 aa). A helical transmembrane segment spans residues 236-256; sequence LSLLGSIIAIGGFSIAVLLVI. Topologically, residues 257-269 are periplasmic; the sequence is LRLTFGPQWAAEG. A helical membrane pass occupies residues 270–290; it reads VFMLFAVLFTFIGAQFIGMGL. Residues 291-322 are Cytoplasmic-facing; it reads LGEYIGRIYTDVRARPRYFVQQVIRPSSKENE.

It belongs to the glycosyltransferase 2 family.

It is found in the cell inner membrane. The enzyme catalyses UDP-4-deoxy-4-formamido-beta-L-arabinose + di-trans,octa-cis-undecaprenyl phosphate = 4-deoxy-4-formamido-alpha-L-arabinopyranosyl di-trans,octa-cis-undecaprenyl phosphate + UDP. The protein operates within glycolipid biosynthesis; 4-amino-4-deoxy-alpha-L-arabinose undecaprenyl phosphate biosynthesis; 4-amino-4-deoxy-alpha-L-arabinose undecaprenyl phosphate from UDP-4-deoxy-4-formamido-beta-L-arabinose and undecaprenyl phosphate: step 1/2. It functions in the pathway bacterial outer membrane biogenesis; lipopolysaccharide biosynthesis. In terms of biological role, catalyzes the transfer of 4-deoxy-4-formamido-L-arabinose from UDP to undecaprenyl phosphate. The modified arabinose is attached to lipid A and is required for resistance to polymyxin and cationic antimicrobial peptides. The protein is Undecaprenyl-phosphate 4-deoxy-4-formamido-L-arabinose transferase of Shigella flexneri serotype 5b (strain 8401).